Reading from the N-terminus, the 1029-residue chain is Myosin phosphatase Rho-interacting protein (1029 aa).

Positions 1-387 (MSAAKENPCR…DRRSTESSMT (387 aa)) are interaction with F-actin. The PH 1 domain maps to 43 to 150 (KPIYGGWLLL…WLEMLMVYPR (108 aa)). The interval 152-267 (NKQNQKKKRK…GDRVDGGRKV (116 aa)) is disordered. The segment covering 179–195 (SSSGGSSGSSSSSSSSS) has biased composition (low complexity). Ser198, Ser224, Ser226, Ser230, and Ser232 each carry phosphoserine. A compositionally biased stretch (low complexity) spans 226-237 (SPVQSPSQSQPP). Positions 245–267 (TGLDSKEDENILSGDRVDGGRKV) are enriched in basic and acidic residues. Residues Ser271, Ser275, Ser294, and Ser297 each carry the phosphoserine modification. Disordered stretches follow at residues 279–306 (AKQD…SRRS) and 333–383 (PSSD…RSTE). Thr300 carries the phosphothreonine modification. Residues 338–354 (RQGRSERRAIPRKRDFA) show a composition bias toward basic and acidic residues. Residue Ser369 is modified to Phosphoserine. The region spanning 391 to 487 (LNFKKGWLTK…WIQTIMKHVL (97 aa)) is the PH 2 domain. Positions 490 to 614 (SAPDVTSSLP…NDGPGMEDTA (125 aa)) are disordered. Over residues 492 to 509 (PDVTSSLPEGKNKSTSFD) the composition is skewed to polar residues. Ser497 is modified (phosphoserine). A compositionally biased stretch (basic and acidic residues) spans 527-550 (PEQKKSRARERRREGRSKTFDWAE). Residues 550–828 (EFRPIQQALA…SVQRELEVLS (279 aa)) form an interaction with RHOA region. Residues 562–571 (RASTVGSSDS) are compositionally biased toward polar residues. A compositionally biased stretch (basic and acidic residues) spans 583 to 592 (ELERERARRR). A Phosphoserine modification is found at Ser622. Phosphothreonine is present on Thr650. The stretch at 675–979 (STHELTSLLE…LKAATEALGE (305 aa)) forms a coiled coil. The residue at position 804 (Ser804) is a Phosphoserine. Residues 828–883 (SEQYSQKCLENAHLAQALEAERQALRQCQRENQELNAHNQELNNRLAAEITRLRTL) are interaction with PPP1R12A. Ser981, Ser997, Ser1018, and Ser1020 each carry phosphoserine.

As to quaternary structure, binds RHOA, PPP1R12A/MBS and PPP1R12C/MBS85 through adjacent coiled coil domains. Interacts with MYZAP. Binds F-actin through its N-terminus.

The protein resides in the cytoplasm. The protein localises to the cytoskeleton. In terms of biological role, targets myosin phosphatase to the actin cytoskeleton. Required for the regulation of the actin cytoskeleton by RhoA and ROCK1. Depletion leads to an increased number of stress fibers in smooth muscle cells through stabilization of actin fibers by phosphorylated myosin. Overexpression of MRIP as well as its F-actin-binding region leads to disassembly of stress fibers in neuronal cells. This Rattus norvegicus (Rat) protein is Myosin phosphatase Rho-interacting protein (Mprip).